Reading from the N-terminus, the 89-residue chain is Small ribosomal subunit protein uS14A (89 aa).

It belongs to the universal ribosomal protein uS14 family. As to quaternary structure, part of the 30S ribosomal subunit. Contacts proteins S3 and S10.

In terms of biological role, binds 16S rRNA, required for the assembly of 30S particles and may also be responsible for determining the conformation of the 16S rRNA at the A site. The polypeptide is Small ribosomal subunit protein uS14A (Ligilactobacillus salivarius (strain UCC118) (Lactobacillus salivarius)).